The following is a 68-amino-acid chain: Large ribosomal subunit protein uL30 (68 aa).

The protein belongs to the universal ribosomal protein uL30 family. Part of the 50S ribosomal subunit.

The polypeptide is Large ribosomal subunit protein uL30 (Pseudarthrobacter chlorophenolicus (strain ATCC 700700 / DSM 12829 / CIP 107037 / JCM 12360 / KCTC 9906 / NCIMB 13794 / A6) (Arthrobacter chlorophenolicus)).